The sequence spans 429 residues: Adenylosuccinate synthetase (429 aa).

GTP is bound by residues 12–18 (GDEGKGK) and 40–42 (GHT). The active-site Proton acceptor is D13. Mg(2+) is bound by residues D13 and G40. Residues 13–16 (DEGK), 38–41 (NAGH), T128, R142, Q223, T238, and R302 contribute to the IMP site. H41 (proton donor) is an active-site residue. 298–304 (TTTGRPR) serves as a coordination point for substrate. GTP-binding positions include R304, 330–332 (SID), and 412–414 (SVG).

The protein belongs to the adenylosuccinate synthetase family. As to quaternary structure, homodimer. Mg(2+) serves as cofactor.

Its subcellular location is the cytoplasm. The catalysed reaction is IMP + L-aspartate + GTP = N(6)-(1,2-dicarboxyethyl)-AMP + GDP + phosphate + 2 H(+). The protein operates within purine metabolism; AMP biosynthesis via de novo pathway; AMP from IMP: step 1/2. In terms of biological role, plays an important role in the de novo pathway of purine nucleotide biosynthesis. Catalyzes the first committed step in the biosynthesis of AMP from IMP. The protein is Adenylosuccinate synthetase of Bacillus thuringiensis (strain Al Hakam).